We begin with the raw amino-acid sequence, 377 residues long: Cytochrome c peroxidase, mitochondrial (377 aa).

The transit peptide at 1–32 (MSFRAPNLIRSTVGRRAGQTLNLRSQVIRRRF) directs the protein to the mitochondrion. The active-site Proton acceptor is H138. Residue H261 participates in heme b binding. W277 (tryptophan radical intermediate) is an active-site residue.

The protein belongs to the peroxidase family. Cytochrome c peroxidase subfamily. In terms of assembly, forms a one-to-one complex with cytochrome c. Interacts with MID1 (via C-terminus); the interaction may contribute to cellular detoxification of radicals. Heme b is required as a cofactor.

It is found in the mitochondrion matrix. It localises to the mitochondrion intermembrane space. It carries out the reaction 2 Fe(II)-[cytochrome c] + H2O2 + 2 H(+) = 2 Fe(III)-[cytochrome c] + 2 H2O. In terms of biological role, destroys radicals which are normally produced within the cells and which are toxic to biological systems. In Cryptococcus neoformans var. grubii serotype A (strain H99 / ATCC 208821 / CBS 10515 / FGSC 9487) (Filobasidiella neoformans var. grubii), this protein is Cytochrome c peroxidase, mitochondrial (CCP1).